Here is a 401-residue protein sequence, read N- to C-terminus: Argininosuccinate synthase (401 aa).

An ATP-binding site is contributed by 8-16; that stretch reads AYSGGLDTT. L-citrulline is bound at residue Tyr87. Gly117 provides a ligand contact to ATP. The L-aspartate site is built by Thr119, Asn123, and Asp124. Asn123 provides a ligand contact to L-citrulline. Residues Arg127, Ser175, Glu259, and Tyr271 each coordinate L-citrulline.

Belongs to the argininosuccinate synthase family. Type 1 subfamily. Homotetramer.

Its subcellular location is the cytoplasm. It carries out the reaction L-citrulline + L-aspartate + ATP = 2-(N(omega)-L-arginino)succinate + AMP + diphosphate + H(+). Its pathway is amino-acid biosynthesis; L-arginine biosynthesis; L-arginine from L-ornithine and carbamoyl phosphate: step 2/3. This is Argininosuccinate synthase from Corynebacterium glutamicum (strain ATCC 13032 / DSM 20300 / JCM 1318 / BCRC 11384 / CCUG 27702 / LMG 3730 / NBRC 12168 / NCIMB 10025 / NRRL B-2784 / 534).